We begin with the raw amino-acid sequence, 505 residues long: Glucan endo-1,3-beta-glucosidase 2 (505 aa).

A signal peptide spans M1 to A20. The N-linked (GlcNAc...) asparagine glycan is linked to N97. Residue E125 is the Proton donor of the active site. 2 N-linked (GlcNAc...) asparagine glycosylation sites follow: N180 and N262. E272 serves as the catalytic Nucleophile. 3 N-linked (GlcNAc...) asparagine glycosylation sites follow: N304, N361, and N365. The cysteines at positions 369 and 432 are disulfide-linked. N-linked (GlcNAc...) asparagine glycosylation is found at N461, N466, and N473. Residue S477 is the site of GPI-anchor amidated serine attachment. The propeptide at S478 to L505 is removed in mature form.

The protein belongs to the glycosyl hydrolase 17 family. Contains two additional disulfide bonds.

It is found in the cell membrane. The enzyme catalyses Hydrolysis of (1-&gt;3)-beta-D-glucosidic linkages in (1-&gt;3)-beta-D-glucans.. In Arabidopsis thaliana (Mouse-ear cress), this protein is Glucan endo-1,3-beta-glucosidase 2.